The sequence spans 245 residues: Fumarate reductase iron-sulfur subunit (245 aa).

Positions 17–98 (PQSAVNKPHF…NGVITLMPMP (82 aa)) constitute a 2Fe-2S ferredoxin-type domain. 4 residues coordinate [2Fe-2S] cluster: C60, C65, C68, and C80. Residues 145 to 174 (AQEVFELDRCIECGCCIASCGTKLMRPNFI) enclose the 4Fe-4S ferredoxin-type domain. The [4Fe-4S] cluster site is built by C154, C157, and C160. [3Fe-4S] cluster-binding residues include C164, C211, and C217. C221 contributes to the [4Fe-4S] cluster binding site.

The protein belongs to the succinate dehydrogenase/fumarate reductase iron-sulfur protein family. Part of an enzyme complex containing three subunits: a flavoprotein (frdA), an iron-sulfur protein (frdB), and diheme cytochrome b (frdC). [2Fe-2S] cluster is required as a cofactor. The cofactor is [3Fe-4S] cluster. [4Fe-4S] cluster serves as cofactor.

The catalysed reaction is a menaquinone + succinate = a menaquinol + fumarate. The polypeptide is Fumarate reductase iron-sulfur subunit (frdB) (Helicobacter pylori (strain J99 / ATCC 700824) (Campylobacter pylori J99)).